Reading from the N-terminus, the 184-residue chain is CKLF-like MARVEL transmembrane domain-containing protein 3 (184 aa).

Positions Met1 to Pro12 are enriched in acidic residues. The segment at Met1–Arg22 is disordered. The region spanning Phe36 to Ala155 is the MARVEL domain. Helical transmembrane passes span Ala64 to Ala84, Leu96 to Ile116, and Ala131 to Phe151. Residues Ser163–Asp184 form a disordered region. Over residues Glu175–Asp184 the composition is skewed to acidic residues.

It belongs to the chemokine-like factor family.

It localises to the membrane. In Mus musculus (Mouse), this protein is CKLF-like MARVEL transmembrane domain-containing protein 3 (Cmtm3).